The chain runs to 672 residues: Zinc finger and BTB domain-containing protein 24 (672 aa).

The BTB domain maps to 39–105; that stretch reads CDITLIVEDV…MYSAVVLVDE (67 aa). The segment at 136–208 is disordered; the sequence is HMQVKRKRGR…GKRKIKQPIR (73 aa). The a.T hook 1 DNA-binding region spans 140–152; the sequence is KRKRGRPKKNQDL. Residues 148–158 are compositionally biased toward basic and acidic residues; that stretch reads KNQDLSQKENP. Positions 160–171 are enriched in polar residues; sequence SELQAQTSSEIQ. The segment covering 198–208 has biased composition (basic residues); sequence EGKRKIKQPIR. A DNA-binding region (a.T hook 2) is located at residues 223–235; that stretch reads PGKRGRRRKYPDT. 8 consecutive C2H2-type zinc fingers follow at residues 237-259, 265-287, 293-315, 321-343, 349-371, 377-399, 405-427, and 433-455; these read ARCE…QRTH, FRCS…QRMH, YICT…MNLH, FTCE…NRVH, PECA…LRTH, FTCE…IRIH, YVCK…EVSH, and FSCS…IKTH. A disordered region spans residues 453 to 492; that stretch reads KTHNKENPPAQAESTDKPPQSAPEQQEQEQQQQQQTSGDK. Over residues 476-487 the composition is skewed to low complexity; the sequence is EQQEQEQQQQQQ.

It belongs to the krueppel C2H2-type zinc-finger protein family.

It is found in the nucleus. May be involved in BMP2-induced transcription. The sequence is that of Zinc finger and BTB domain-containing protein 24 (zbtb24) from Danio rerio (Zebrafish).